A 228-amino-acid polypeptide reads, in one-letter code: 3-dehydroquinate dehydratase (228 aa).

3-dehydroquinate-binding positions include 30–32 and Arg-62; that span reads EWR. Residue His-118 is the Proton donor/acceptor of the active site. Lys-143 serves as the catalytic Schiff-base intermediate with substrate. 3-dehydroquinate contacts are provided by Arg-186, Ser-205, and Gln-209.

Belongs to the type-I 3-dehydroquinase family. In terms of assembly, homodimer.

The enzyme catalyses 3-dehydroquinate = 3-dehydroshikimate + H2O. It participates in metabolic intermediate biosynthesis; chorismate biosynthesis; chorismate from D-erythrose 4-phosphate and phosphoenolpyruvate: step 3/7. In terms of biological role, involved in the third step of the chorismate pathway, which leads to the biosynthesis of aromatic amino acids. Catalyzes the cis-dehydration of 3-dehydroquinate (DHQ) and introduces the first double bond of the aromatic ring to yield 3-dehydroshikimate. In Streptococcus pyogenes serotype M12 (strain MGAS9429), this protein is 3-dehydroquinate dehydratase.